The primary structure comprises 243 residues: Segregation and condensation protein A (243 aa).

This sequence belongs to the ScpA family. Component of a cohesin-like complex composed of ScpA, ScpB and the Smc homodimer, in which ScpA and ScpB bind to the head domain of Smc. The presence of the three proteins is required for the association of the complex with DNA.

Its subcellular location is the cytoplasm. Its function is as follows. Participates in chromosomal partition during cell division. May act via the formation of a condensin-like complex containing Smc and ScpB that pull DNA away from mid-cell into both cell halves. In Halothermothrix orenii (strain H 168 / OCM 544 / DSM 9562), this protein is Segregation and condensation protein A.